Here is a 386-residue protein sequence, read N- to C-terminus: Formate-dependent phosphoribosylglycinamide formyltransferase (386 aa).

N(1)-(5-phospho-beta-D-ribosyl)glycinamide is bound by residues 15 to 16 and E75; that span reads EL. ATP-binding positions include R107, K148, 153 to 158, 188 to 191, and E196; these read SSGKGQ and EQFI. One can recognise an ATP-grasp domain in the interval 112–301; sequence ALAAQQLNLQ…EFELHLRAIV (190 aa). Mg(2+)-binding residues include E260 and E272. Residues D279, K349, and 356–357 each bind N(1)-(5-phospho-beta-D-ribosyl)glycinamide; that span reads RR.

It belongs to the PurK/PurT family. As to quaternary structure, homodimer.

The enzyme catalyses N(1)-(5-phospho-beta-D-ribosyl)glycinamide + formate + ATP = N(2)-formyl-N(1)-(5-phospho-beta-D-ribosyl)glycinamide + ADP + phosphate + H(+). It functions in the pathway purine metabolism; IMP biosynthesis via de novo pathway; N(2)-formyl-N(1)-(5-phospho-D-ribosyl)glycinamide from N(1)-(5-phospho-D-ribosyl)glycinamide (formate route): step 1/1. Its function is as follows. Involved in the de novo purine biosynthesis. Catalyzes the transfer of formate to 5-phospho-ribosyl-glycinamide (GAR), producing 5-phospho-ribosyl-N-formylglycinamide (FGAR). Formate is provided by PurU via hydrolysis of 10-formyl-tetrahydrofolate. The chain is Formate-dependent phosphoribosylglycinamide formyltransferase from Francisella tularensis subsp. tularensis (strain WY96-3418).